A 464-amino-acid chain; its full sequence is MEFLPLFHNLRGSRVLVVGGGEIALRKSRLIADAGAVLRVVAPEIEAQLSELVVQSGGEMILRGYSESDLDGCVLIIAATDDEPLNAQVSHDARLRCVPVNVVDAPALCTVIFPAIVDRSPLVIAVSSGGDAPVLARLIRAKLETWIPSTYGQLAGLAARFRNQVKGLFPNVQQRRAFWEDVFQGAIADRQLAGQGAEAERLLIAKIAGEPPPETGEVYLVGAGPGDPDLLTFRALRLMQQADVVLYDRLVAPTILDLCRRDAERVYVGKRRAEHAVPQEQINQQLVALAKQGKRVVRLKGGDPFIFGRGGEEIEELAVHGIPFQVVPGITAASGCAAYAGIPLTHRDHAQSVRFITGHLKDGTTDLPWSDLVAPAQTLVFYMGLIGLPVICEELIRHGRSADTPAALVQQGTTVNQRVFTGTLANLPQLVAEHEVHAPTLVIIGEVVKLREKLAWFEGAQATV.

Residues 1–203 are precorrin-2 dehydrogenase /sirohydrochlorin ferrochelatase; sequence MEFLPLFHNL…GQGAEAERLL (203 aa). NAD(+) contacts are provided by residues 22–23 and 43–44; these read EI and PE. The residue at position 128 (Ser-128) is a Phosphoserine. The segment at 216 to 464 is uroporphyrinogen-III C-methyltransferase; that stretch reads GEVYLVGAGP…AWFEGAQATV (249 aa). Residue Pro-225 participates in S-adenosyl-L-methionine binding. Asp-248 acts as the Proton acceptor in catalysis. Lys-270 functions as the Proton donor in the catalytic mechanism. S-adenosyl-L-methionine is bound by residues 301-303, Ile-306, 331-332, Met-383, and Gly-412; these read GGD and TA.

The protein in the N-terminal section; belongs to the precorrin-2 dehydrogenase / sirohydrochlorin ferrochelatase family. In the C-terminal section; belongs to the precorrin methyltransferase family.

It catalyses the reaction uroporphyrinogen III + 2 S-adenosyl-L-methionine = precorrin-2 + 2 S-adenosyl-L-homocysteine + H(+). The enzyme catalyses precorrin-2 + NAD(+) = sirohydrochlorin + NADH + 2 H(+). It carries out the reaction siroheme + 2 H(+) = sirohydrochlorin + Fe(2+). It functions in the pathway cofactor biosynthesis; adenosylcobalamin biosynthesis; precorrin-2 from uroporphyrinogen III: step 1/1. Its pathway is cofactor biosynthesis; adenosylcobalamin biosynthesis; sirohydrochlorin from precorrin-2: step 1/1. The protein operates within porphyrin-containing compound metabolism; siroheme biosynthesis; precorrin-2 from uroporphyrinogen III: step 1/1. It participates in porphyrin-containing compound metabolism; siroheme biosynthesis; siroheme from sirohydrochlorin: step 1/1. It functions in the pathway porphyrin-containing compound metabolism; siroheme biosynthesis; sirohydrochlorin from precorrin-2: step 1/1. Multifunctional enzyme that catalyzes the SAM-dependent methylations of uroporphyrinogen III at position C-2 and C-7 to form precorrin-2 via precorrin-1. Then it catalyzes the NAD-dependent ring dehydrogenation of precorrin-2 to yield sirohydrochlorin. Finally, it catalyzes the ferrochelation of sirohydrochlorin to yield siroheme. The polypeptide is Siroheme synthase (Pseudomonas savastanoi pv. phaseolicola (strain 1448A / Race 6) (Pseudomonas syringae pv. phaseolicola (strain 1448A / Race 6))).